The following is a 116-amino-acid chain: Large ribosomal subunit protein uL18 (116 aa).

It belongs to the universal ribosomal protein uL18 family. In terms of assembly, part of the 50S ribosomal subunit; part of the 5S rRNA/L5/L18/L25 subcomplex. Contacts the 5S and 23S rRNAs.

Functionally, this is one of the proteins that bind and probably mediate the attachment of the 5S RNA into the large ribosomal subunit, where it forms part of the central protuberance. The chain is Large ribosomal subunit protein uL18 from Shewanella frigidimarina (strain NCIMB 400).